The following is a 508-amino-acid chain: Argininosuccinate lyase (508 aa).

The protein belongs to the lyase 1 family. Argininosuccinate lyase subfamily.

The protein resides in the cytoplasm. It catalyses the reaction 2-(N(omega)-L-arginino)succinate = fumarate + L-arginine. The protein operates within amino-acid biosynthesis; L-arginine biosynthesis; L-arginine from L-ornithine and carbamoyl phosphate: step 3/3. The polypeptide is Argininosuccinate lyase (Methanopyrus kandleri (strain AV19 / DSM 6324 / JCM 9639 / NBRC 100938)).